A 361-amino-acid chain; its full sequence is Tryptophan--tRNA ligase, mitochondrial (361 aa).

The transit peptide at M1 to V16 directs the protein to the mitochondrion. ATP-binding positions include Q21 and H27 to N30. Residues P22–N30 carry the 'HIGH' region motif. An L-tryptophan-binding site is contributed by D165. Residues G177–D179, K225–S229, and K228 each bind ATP. Residues K225 to S229 carry the 'KMSKS' region motif.

This sequence belongs to the class-I aminoacyl-tRNA synthetase family. As to quaternary structure, homodimer.

Its subcellular location is the mitochondrion matrix. It catalyses the reaction tRNA(Trp) + L-tryptophan + ATP = L-tryptophyl-tRNA(Trp) + AMP + diphosphate + H(+). This Schizosaccharomyces pombe (strain 972 / ATCC 24843) (Fission yeast) protein is Tryptophan--tRNA ligase, mitochondrial.